The sequence spans 350 residues: DNA repair protein rhp55 (350 aa).

An ATP-binding site is contributed by 51 to 58 (GAPGMGKT). Positions 331–350 (QSIPTNSSQRRKRSILECES) are disordered.

This sequence belongs to the RecA family. RAD55 subfamily.

It localises to the nucleus. Functionally, required for radiation resistance and meiotic viability and acts in recombination and recombinational DNA repair pathways. The polypeptide is DNA repair protein rhp55 (rhp55) (Schizosaccharomyces pombe (strain 972 / ATCC 24843) (Fission yeast)).